Consider the following 430-residue polypeptide: Adenylosuccinate synthetase (430 aa).

GTP contacts are provided by residues 12-18 (GDEGKGK) and 40-42 (GHT). Aspartate 13 (proton acceptor) is an active-site residue. Positions 13 and 40 each coordinate Mg(2+). Residues 13–16 (DEGK), 38–41 (NAGH), threonine 128, arginine 142, glutamine 223, threonine 238, and arginine 302 contribute to the IMP site. Residue histidine 41 is the Proton donor of the active site. 298–304 (TTTGRPR) lines the substrate pocket. Residues arginine 304, 330 to 332 (SID), and 413 to 415 (SVG) each bind GTP.

Belongs to the adenylosuccinate synthetase family. Homodimer. Mg(2+) serves as cofactor.

Its subcellular location is the cytoplasm. The catalysed reaction is IMP + L-aspartate + GTP = N(6)-(1,2-dicarboxyethyl)-AMP + GDP + phosphate + 2 H(+). Its pathway is purine metabolism; AMP biosynthesis via de novo pathway; AMP from IMP: step 1/2. Plays an important role in the de novo pathway of purine nucleotide biosynthesis. Catalyzes the first committed step in the biosynthesis of AMP from IMP. In Lactococcus lactis subsp. lactis (strain IL1403) (Streptococcus lactis), this protein is Adenylosuccinate synthetase.